Here is an 845-residue protein sequence, read N- to C-terminus: MPMASGDESMSARSENPVQSARFDEATVLHELEHYLPKQAPLKDFVHHNTLHAFQDSKFHDAARNASGIFGYNLSLKLDKYRDLYHRGEITPAVLDWVVRRHKGDQSDLWKTKVVAGSFAPPPLPRIGAVRANWKKNLRIDLDSLVHPLLFRILCSYLDQGISMWTFPSGGEGFLCAIRELERHSFTSFFRRERARRLLLEQDCSIAGLLKLLVRDEALFERYLFDQQFAHPGWSGMVTVIEAQPDTLIDSRRIGLRELIVFELLLEIDALDEHFDEQWSPLEAELGGEPLDILAEVPRTELHDALAIWQEALEWSFYDPVLSAIQRQPAESPALPVKSFQGLFCIDDRICSFRRHIESLDPHCETYGTPGFFGVEFYFKPENAKSHTKVCPGSIEPRYLIKETGSRDRLEAEPHFSKHSHDLLGGWVISQTLGFWSAVKLFDSILKPSASPLGASSFRHMDRASSLTILNRSPDDREDGLQIGFSVAEMAERAENLLGSIGLTQDFAPIVYVVGHGASNTNNPHYAAYDCGACSGRPGSVNARVICFMLNHPEVRAILAGKGIEIPAATQFVGALHDTTRDEIAFYDEDSLSPDSRARHRANAAVFDKALALNAKERSRRFELTDSQQSPERVHEAVKARAVSLFEPRPELNHATNALCIVGRRFLSRKLFLDRRSFLNSYDYRVDPDGRFLLGILRAAAPVCGGINLEYFFSHVDNQKLGAGSKLPHNVMGLIGVANGNDGDLRPGLPSQMIEVHHPVRMMIVVEHFPAVVLNTIRQQPATWEWFANEWLNLTVVDPETHELFRFRDGIFEPYRALTERLEVAADLEKLFETQADNLPVLALS.

The disordered stretch occupies residues 1–20 (MPMASGDESMSARSENPVQS). C345, D347, H516, and C531 together coordinate Zn(2+).

Belongs to the inorganic carbon transporter (TC 9.A.2) DabA family. As to quaternary structure, forms a complex with DabB. The cofactor is Zn(2+).

It localises to the cell inner membrane. Functionally, part of an energy-coupled inorganic carbon pump. This Azotobacter vinelandii (strain DJ / ATCC BAA-1303) protein is Probable inorganic carbon transporter subunit DabA.